Consider the following 606-residue polypeptide: MATKDPTAVERANLLNMAKLSIKGLIESALSFGRTLDSDYPPLQQFFVVMEHCLKHGLKVRKSFLSYNKTIWGPLELVEKLYPEAEEIGASVRDLPGLKTPLGRARAWLRLALMQKKMADYLRCLIIQRDLLSEFYEYHALMMEEEGAVIVGLLVGLNVIDANLCVKGEDLDSQVGVIDFSMYLKNEEDIGNKERNVQIAAILDQKNYVEELNRQLNSTVSSLHSRVDSLEKSNTKLIEELAIAKNNIIKLQEENHQLRSENKLILMKTQQHLEVTKVDVETELQTYKHSRQGLDEMYNEARRQLRDESQLRQDVENELAVQVSMKHEIELAMKLLEKDIHEKQDTLIGLRQQLEEVKAINIEMYQKLQGSEDGLKEKNEIIARLEEKTNKITAAMRQLEQRLQQAEKAQMEAEDEDEKYLQECLSKSDSLQKQISQKEKQLVQLETDLKIEKEWRQTLQEDLQKEKDALSHLRNETQQIISLKKEFLNLQDENQQLKKIYHEQEQALQELGNKLSESKLKIEDIKEANKALQGLVWLKDKEATHCKLCEKEFSLSKRKHHCRNCGEIFCNACSDNELPLPSSPKPVRVCDSCHALLIQRCSSNLP.

The 133-residue stretch at 37–169 (DSDYPPLQQF…IDANLCVKGE (133 aa)) folds into the RUN domain. Residues 210 to 534 (EELNRQLNST…IKEANKALQG (325 aa)) adopt a coiled-coil conformation. The segment at 540 to 598 (DKEATHCKLCEKEFSLSKRKHHCRNCGEIFCNACSDNELPLPSSPKPVRVCDSCHALLI) adopts an FYVE-type zinc-finger fold. Zn(2+) is bound by residues cysteine 546, cysteine 549, cysteine 562, cysteine 565, cysteine 570, cysteine 573, cysteine 590, and cysteine 593.

Interacts with BMX. Expressed in brain, lung and testis.

The protein localises to the nucleus. The sequence is that of RUN and FYVE domain-containing protein 2 (RUFY2) from Homo sapiens (Human).